Here is a 219-residue protein sequence, read N- to C-terminus: Thymidylate kinase (219 aa).

G9–T16 is a binding site for ATP.

Belongs to the thymidylate kinase family.

The enzyme catalyses dTMP + ATP = dTDP + ADP. Phosphorylation of dTMP to form dTDP in both de novo and salvage pathways of dTTP synthesis. The polypeptide is Thymidylate kinase (Pelobacter propionicus (strain DSM 2379 / NBRC 103807 / OttBd1)).